Consider the following 682-residue polypeptide: Potassium-transporting ATPase ATP-binding subunit (682 aa).

4 helical membrane passes run 34 to 54, 62 to 82, 219 to 239, and 254 to 274; these read PVMF…IAMA, ALFS…ANFA, IALT…TATL, and VLVA…LSAI. D307 acts as the 4-aspartylphosphate intermediate in catalysis. Residues D344, E348, 377–384, and K395 each bind ATP; that span reads FTAQSRMS. Residues D518 and D522 each coordinate Mg(2+). 3 consecutive transmembrane segments (helical) span residues 588-608, 616-636, and 656-676; these read FAII…LNIM, AILS…PLAL, and IYGL…DLLL.

This sequence belongs to the cation transport ATPase (P-type) (TC 3.A.3) family. Type IA subfamily. In terms of assembly, the system is composed of three essential subunits: KdpA, KdpB and KdpC.

Its subcellular location is the cell inner membrane. It catalyses the reaction K(+)(out) + ATP + H2O = K(+)(in) + ADP + phosphate + H(+). In terms of biological role, part of the high-affinity ATP-driven potassium transport (or Kdp) system, which catalyzes the hydrolysis of ATP coupled with the electrogenic transport of potassium into the cytoplasm. This subunit is responsible for energy coupling to the transport system and for the release of the potassium ions to the cytoplasm. The chain is Potassium-transporting ATPase ATP-binding subunit from Shigella sonnei (strain Ss046).